A 412-amino-acid chain; its full sequence is Gamma-glutamyl phosphate reductase (412 aa).

The protein belongs to the gamma-glutamyl phosphate reductase family.

The protein resides in the cytoplasm. It catalyses the reaction L-glutamate 5-semialdehyde + phosphate + NADP(+) = L-glutamyl 5-phosphate + NADPH + H(+). The protein operates within amino-acid biosynthesis; L-proline biosynthesis; L-glutamate 5-semialdehyde from L-glutamate: step 2/2. Catalyzes the NADPH-dependent reduction of L-glutamate 5-phosphate into L-glutamate 5-semialdehyde and phosphate. The product spontaneously undergoes cyclization to form 1-pyrroline-5-carboxylate. The sequence is that of Gamma-glutamyl phosphate reductase from Aliarcobacter butzleri (strain RM4018) (Arcobacter butzleri).